A 202-amino-acid chain; its full sequence is GMP synthase [glutamine-hydrolyzing] subunit A (202 aa).

The region spanning K4–K194 is the Glutamine amidotransferase type-1 domain. C81 acts as the Nucleophile in catalysis. Residues H168 and E170 contribute to the active site.

As to quaternary structure, heterodimer composed of a glutamine amidotransferase subunit (A) and a GMP-binding subunit (B).

It catalyses the reaction XMP + L-glutamine + ATP + H2O = GMP + L-glutamate + AMP + diphosphate + 2 H(+). The protein operates within purine metabolism; GMP biosynthesis; GMP from XMP (L-Gln route): step 1/1. Its function is as follows. Catalyzes the synthesis of GMP from XMP. The sequence is that of GMP synthase [glutamine-hydrolyzing] subunit A from Thermoplasma volcanium (strain ATCC 51530 / DSM 4299 / JCM 9571 / NBRC 15438 / GSS1).